We begin with the raw amino-acid sequence, 415 residues long: U-box domain-containing protein 29 (415 aa).

One can recognise a U-box domain in the interval 11-85 (TVPSFFKCPI…NIWSDSIGRR (75 aa)). ARM repeat units lie at residues 221–263 (KSKL…TISK) and 265–307 (KRVR…TLSS).

Binds to SD129 and SD25.

It carries out the reaction S-ubiquitinyl-[E2 ubiquitin-conjugating enzyme]-L-cysteine + [acceptor protein]-L-lysine = [E2 ubiquitin-conjugating enzyme]-L-cysteine + N(6)-ubiquitinyl-[acceptor protein]-L-lysine.. It functions in the pathway protein modification; protein ubiquitination. In terms of biological role, functions as an E3 ubiquitin ligase. This Arabidopsis thaliana (Mouse-ear cress) protein is U-box domain-containing protein 29 (PUB29).